Here is a 481-residue protein sequence, read N- to C-terminus: Endonuclease Bax1 (481 aa).

Positions M1–I136 are N-terminal domain (NTD). Residues Y158–K250 form a central domain (CRD) region. The interval D260–V364 is nuclease domain (NUS). 3 residues coordinate a divalent metal cation: E265, D297, and E310. The C-terminal domain (CTD) stretch occupies residues P414 to N481.

This sequence belongs to the Bax1 family. In terms of assembly, homodimer in solution, forms a heterodimer with XPB2. Requires a divalent metal cation as cofactor.

Functionally, a dual DNA endonuclease probably involved in nucleotide excision repair (NER). The N-terminal nuclease domain (NTD) of the XPB2-Bax1 complex cleaves on one side of a DNA bubble (which presumably mimics DNA damage), while the NUS nuclease domain cleaves the other side, respectively called 5' and 3' nuclease activities. Interaction with XPB blocks the NTD nuclease activity. Binds to and stimulates the ATPase activity (and probably also helicase activity) of XPB2. Increases affinity of XPB2 for forked DNA. Does not stimulate the DNA-dependent activity of XPB1. In an XPB2-Bax1-bubble DNA crystal (12 bp of dsDNA, a 6 base bubble and 6 bp of dsDNA) the short 6 bp arm is unwound. The 2 helicase and the ThM domains of XPB2 with the NTD and CRD domains of Bax1 encircle the DNA, forming a tunnel where the 12 bp dsDNA and the ds-ssDNA junction are located. The ThM domain is wedged between the ssDNA tails, with the 5' ssDNA contacting Bax1 and the 3' ssDNA in a channel in XPB2. The nuclease domain (NUS) of Bax1 does not contact DNA in the bubble DNA complex. The chain is Endonuclease Bax1 from Sulfurisphaera tokodaii (strain DSM 16993 / JCM 10545 / NBRC 100140 / 7) (Sulfolobus tokodaii).